A 355-amino-acid polypeptide reads, in one-letter code: DnaJ homolog dnj-20 (355 aa).

Residues 1 to 21 (MRILNVSLLVLASSLVAFVEC) form the signal peptide. The J domain maps to 24–89 (DFYKILGVAK…EKRAMYDRHG (66 aa)).

The protein is DnaJ homolog dnj-20 of Caenorhabditis elegans.